A 354-amino-acid polypeptide reads, in one-letter code: Guanine nucleotide-binding protein G(i) subunit alpha-3 (354 aa).

A lipid anchor (N-myristoyl glycine) is attached at Gly-2. Cys-3 is lipidated: S-palmitoyl cysteine. Residues 32–354 enclose the G-alpha domain; the sequence is KEVKLLLLGA…KNNLKECGLY (323 aa). A G1 motif region spans residues 35-48; it reads KLLLLGAGESGKST. GTP contacts are provided by Gly-42, Glu-43, Ser-44, Gly-45, Lys-46, Ser-47, Thr-48, Asp-150, Ser-151, Leu-175, Arg-176, Thr-177, Arg-178, Val-179, Lys-180, Thr-181, Val-201, and Gly-203. 6 residues coordinate GDP: Glu-43, Ser-44, Gly-45, Lys-46, Ser-47, and Thr-48. Ser-47 lines the Mg(2+) pocket. Positions 151, 175, 176, 177, and 178 each coordinate GDP. Residues 173–181 form a G2 motif region; it reads DVLRTRVKT. Arg-178 carries the post-translational modification ADP-ribosylarginine; by cholera toxin. Thr-181 contributes to the Mg(2+) binding site. The interval 196-205 is G3 motif; it reads FKMFDVGGQR. Gln-204 carries the post-translational modification Deamidated glutamine; by Photorhabdus PAU_02230. Residues 265 to 272 form a G4 motif region; sequence ILFLNKKD. 7 residues coordinate GTP: Asn-269, Lys-270, Asp-272, Leu-273, Cys-325, Ala-326, and Thr-327. Residues Asn-269, Lys-270, and Asp-272 each contribute to the GDP site. The segment at 324–329 is G5 motif; the sequence is TCATDT. Cys-325 and Ala-326 together coordinate GDP. Cys-351 carries the post-translational modification ADP-ribosylcysteine; by pertussis toxin.

It belongs to the G-alpha family. G(i/o/t/z) subfamily. Heterotrimeric G proteins are composed of 3 units; alpha, beta and gamma. The alpha subunit contains the guanine nucleotide binding site. GTP binding causes dissociation of the heterotrimer, liberating the individual subunits so that they can interact with downstream effector proteins. Forms a complex with CCDC88A/GIV and EGFR which leads to enhanced EGFR signaling and triggering of cell migration; ligand stimulation is required for recruitment of GNAI3 to the complex. Interacts (inactive GDP-bound form) with CCDC88A/GIV (via GBA motif); the interaction leads to activation of GNAI3. Interacts (inactive GDP-bound form) with CCDC88C/DAPLE (via GBA motif); the interaction leads to activation of GNAI3. Interacts (inactive GDP-bound form) with NUCB1 (via GBA motif) and NUCB2 (via GBA motif); the interaction leads to activation of GNAI3. Interacts (inactive GDP-bound form) with PLCD4 (via GBA motif); the interaction leads to activation of GNAI3. Interacts with INSR; the interaction is probably mediated by CCDC88A/GIV. Interacts with GPSM1. Interacts (GDP-bound form) with GPSM2 (via GoLoco domains). Does not interact with RGS2. Interacts with RGS8 and RGS10; this strongly enhances the intrinsic GTPase activity. Interacts with RGS16; this strongly enhances the intrinsic GTPase activity. Interacts with RGS12. Interacts (via active GTP- or inactive GDP-bound form) with RGS14. Interacts (via active GTP-bound form) with TRPC5 (via ANK repeats) in a homotetrameric ion channel; the interaction is direct and activates the channel activity. Post-translationally, (Microbial infection) Deamidated at Gln-204 by Photorhabdus asymbiotica toxin PAU_02230, blocking GTP hydrolysis of heterotrimeric GNAQ or GNA11 and G-alphai (GNAI1, GNAI2 or GNAI3) proteins, thereby activating RhoA.

The protein resides in the cytoplasm. It localises to the cell membrane. The protein localises to the cytoskeleton. Its subcellular location is the microtubule organizing center. It is found in the centrosome. Heterotrimeric guanine nucleotide-binding proteins (G proteins) function as transducers downstream of G protein-coupled receptors (GPCRs) in numerous signaling cascades. The alpha chain contains the guanine nucleotide binding site and alternates between an active, GTP-bound state and an inactive, GDP-bound state. Signaling by an activated GPCR promotes GDP release and GTP binding. The alpha subunit has a low GTPase activity that converts bound GTP to GDP, thereby terminating the signal. Both GDP release and GTP hydrolysis are modulated by numerous regulatory proteins. Signaling is mediated via effector proteins, such as adenylate cyclase. Inhibits adenylate cyclase activity, leading to decreased intracellular cAMP levels. Stimulates the activity of receptor-regulated K(+) channels. The active GTP-bound form prevents the association of RGS14 with centrosomes and is required for the translocation of RGS14 from the cytoplasm to the plasma membrane. May play a role in cell division. The active GTP-bound form activates the calcium permeant TRPC5 ion channels. The sequence is that of Guanine nucleotide-binding protein G(i) subunit alpha-3 (GNAI3) from Homo sapiens (Human).